Reading from the N-terminus, the 372-residue chain is Bifunctional enzyme IspD/IspF (372 aa).

The interval 1–211 (MLDISLIMLG…SALKAPENEL (211 aa)) is 2-C-methyl-D-erythritol 4-phosphate cytidylyltransferase. The tract at residues 212–372 (FVGSGFDVHE…SLKFYNWTQI (161 aa)) is 2-C-methyl-D-erythritol 2,4-cyclodiphosphate synthase. A divalent metal cation-binding residues include Asp218 and His220. 4-CDP-2-C-methyl-D-erythritol 2-phosphate contacts are provided by residues 218–220 (DVH) and 244–245 (HS). His252 lines the a divalent metal cation pocket. Residues 266 to 268 (DIG), 271 to 275 (FPDTD), 342 to 345 (TTTE), Phe349, and Arg352 each bind 4-CDP-2-C-methyl-D-erythritol 2-phosphate.

The protein in the N-terminal section; belongs to the IspD/TarI cytidylyltransferase family. IspD subfamily. This sequence in the C-terminal section; belongs to the IspF family. A divalent metal cation serves as cofactor.

The catalysed reaction is 2-C-methyl-D-erythritol 4-phosphate + CTP + H(+) = 4-CDP-2-C-methyl-D-erythritol + diphosphate. It catalyses the reaction 4-CDP-2-C-methyl-D-erythritol 2-phosphate = 2-C-methyl-D-erythritol 2,4-cyclic diphosphate + CMP. It participates in isoprenoid biosynthesis; isopentenyl diphosphate biosynthesis via DXP pathway; isopentenyl diphosphate from 1-deoxy-D-xylulose 5-phosphate: step 2/6. The protein operates within isoprenoid biosynthesis; isopentenyl diphosphate biosynthesis via DXP pathway; isopentenyl diphosphate from 1-deoxy-D-xylulose 5-phosphate: step 4/6. Functionally, bifunctional enzyme that catalyzes the formation of 4-diphosphocytidyl-2-C-methyl-D-erythritol from CTP and 2-C-methyl-D-erythritol 4-phosphate (MEP) (IspD), and catalyzes the conversion of 4-diphosphocytidyl-2-C-methyl-D-erythritol 2-phosphate (CDP-ME2P) to 2-C-methyl-D-erythritol 2,4-cyclodiphosphate (ME-CPP) with a corresponding release of cytidine 5-monophosphate (CMP) (IspF). This is Bifunctional enzyme IspD/IspF from Campylobacter concisus (strain 13826).